A 236-amino-acid chain; its full sequence is MKYKLLPCLLAILLTGCDRTEVTLSFTPEMASFSNEFDFDPLRGPVKDFTQTLMDEQGEVTKRVSGTLSEEGCFDSLELLDLENNTVVALVLDANYYRDAETLEKRVRLQGKCQLAELPSAGVSWETDDNGFVIKASSKQMQMEYRYDDQGYPLGKTTKSNDKTLSVSATPSTDPIKKLDYTAVTLLNNQRVGNVKQSCEYDSHANPVGCQLIIVDEGVKPAVERVYTIKNTIDYY.

Residues methionine 1 to glycine 16 form the signal peptide. Cysteine 17 carries the N-palmitoyl cysteine lipid modification. Residue cysteine 17 is the site of S-diacylglycerol cysteine attachment.

The protein belongs to the UPF0257 family.

It is found in the cell membrane. The chain is UPF0257 lipoprotein YnfC from Escherichia coli O157:H7.